The primary structure comprises 205 residues: Alpha-1-acid glycoprotein (205 aa).

A signal peptide spans 1 to 18 (MALHMVLVVLSLLPLLEA). N-linked (GlcNAc...) asparagine glycans are attached at residues asparagine 25, asparagine 34, asparagine 76, asparagine 94, asparagine 104, and asparagine 134. Cysteine 91 and cysteine 183 are oxidised to a cystine.

Belongs to the calycin superfamily. Lipocalin family.

It is found in the secreted. Functionally, functions as a transport protein in the blood stream. Binds various ligands in the interior of its beta-barrel domain. Appears to function in modulating the activity of the immune system during the acute-phase reaction. In Rattus norvegicus (Rat), this protein is Alpha-1-acid glycoprotein (Orm1).